We begin with the raw amino-acid sequence, 416 residues long: Multifunctional CCA protein (416 aa).

ATP contacts are provided by Gly8 and Arg11. Residues Gly8 and Arg11 each coordinate CTP. 2 residues coordinate Mg(2+): Asp21 and Asp23. 3 residues coordinate ATP: Arg91, Arg137, and Arg140. Residues Arg91, Arg137, and Arg140 each contribute to the CTP site. One can recognise an HD domain in the interval 228 to 329 (TGLHTMLVLA…IKLFDKADFW (102 aa)).

The protein belongs to the tRNA nucleotidyltransferase/poly(A) polymerase family. Bacterial CCA-adding enzyme type 1 subfamily. As to quaternary structure, monomer. Can also form homodimers and oligomers. The cofactor is Mg(2+). Ni(2+) serves as cofactor.

The catalysed reaction is a tRNA precursor + 2 CTP + ATP = a tRNA with a 3' CCA end + 3 diphosphate. The enzyme catalyses a tRNA with a 3' CCA end + 2 CTP + ATP = a tRNA with a 3' CCACCA end + 3 diphosphate. Catalyzes the addition and repair of the essential 3'-terminal CCA sequence in tRNAs without using a nucleic acid template. Adds these three nucleotides in the order of C, C, and A to the tRNA nucleotide-73, using CTP and ATP as substrates and producing inorganic pyrophosphate. tRNA 3'-terminal CCA addition is required both for tRNA processing and repair. Also involved in tRNA surveillance by mediating tandem CCA addition to generate a CCACCA at the 3' terminus of unstable tRNAs. While stable tRNAs receive only 3'-terminal CCA, unstable tRNAs are marked with CCACCA and rapidly degraded. The protein is Multifunctional CCA protein of Shewanella sp. (strain ANA-3).